A 363-amino-acid polypeptide reads, in one-letter code: Pyrimidine monooxygenase RutA (363 aa).

FMN contacts are provided by residues 49 to 50 (IK), Asn115, Glu124, 140 to 141 (RY), and Ser190.

It belongs to the NtaA/SnaA/DszA monooxygenase family. RutA subfamily.

The enzyme catalyses uracil + FMNH2 + NADH + O2 = (Z)-3-ureidoacrylate + FMN + NAD(+) + H2O + H(+). It catalyses the reaction thymine + FMNH2 + NADH + O2 = (Z)-2-methylureidoacrylate + FMN + NAD(+) + H2O + H(+). Catalyzes the pyrimidine ring opening between N-3 and C-4 by an unusual flavin hydroperoxide-catalyzed mechanism, adding oxygen atoms in the process to yield ureidoacrylate peracid, that immediately reacts with FMN forming ureidoacrylate and FMN-N(5)-oxide. The FMN-N(5)-oxide reacts spontaneously with NADH to produce FMN. Requires the flavin reductase RutF to regenerate FMN in vivo. In Enterobacter sp. (strain 638), this protein is Pyrimidine monooxygenase RutA.